The following is a 404-amino-acid chain: p-hydroxybenzoate hydroxylase (404 aa).

FAD-binding positions include Glu-35, 45 to 50 (RIRAGI), and Gln-105. Residues Tyr-203, 214–216 (SMR), and Tyr-224 contribute to the substrate site. Asp-288 lines the FAD pocket. Pro-295 serves as a coordination point for substrate. 301-302 (LN) contacts FAD.

The protein belongs to the aromatic-ring hydroxylase family. As to quaternary structure, homodimer. FAD is required as a cofactor.

It carries out the reaction 4-hydroxybenzoate + NADPH + O2 + H(+) = 3,4-dihydroxybenzoate + NADP(+) + H2O. It participates in aromatic compound metabolism; benzoate degradation via hydroxylation; 3,4-dihydroxybenzoate from benzoate: step 2/2. Functionally, catalyzes the incorporation of an atom of dioxygen into p-hydroxybenzoate (p-OHB) to form 3,4-dihydroxybenzoate (3,4DOHB). The reaction occurs in two parts: reduction of the flavin adenine dinucleotide (FAD) in the enzyme by reduced nicotinamide adenine dinucleotide phosphate (NADPH) in response to binding p-hydroxybenzoate to the enzyme and oxidation of reduced FAD with oxygen to form a hydroperoxide, which then oxygenates p-hydroxybenzoate. This is p-hydroxybenzoate hydroxylase (pobA) from Acinetobacter baylyi (strain ATCC 33305 / BD413 / ADP1).